The chain runs to 195 residues: Imidazoleglycerol-phosphate dehydratase (195 aa).

Belongs to the imidazoleglycerol-phosphate dehydratase family.

Its subcellular location is the cytoplasm. The enzyme catalyses D-erythro-1-(imidazol-4-yl)glycerol 3-phosphate = 3-(imidazol-4-yl)-2-oxopropyl phosphate + H2O. It functions in the pathway amino-acid biosynthesis; L-histidine biosynthesis; L-histidine from 5-phospho-alpha-D-ribose 1-diphosphate: step 6/9. The chain is Imidazoleglycerol-phosphate dehydratase from Paraburkholderia phytofirmans (strain DSM 17436 / LMG 22146 / PsJN) (Burkholderia phytofirmans).